The sequence spans 273 residues: WIMGHMVNAIGQIDEFVNLGANSIETDVSFDDSANPQYTYHGVPCDCGRSCLKWENYNDFLKGLRSATTPGNSKYQSKLVLVVFDLKTGSLYDNQANEAGKKLAKNLLQHYWNNGNNGGRAYIVLSIPDLNHYPLIKGFTDTLTQEGHPELLEKVGYDFSGNDAIGDVANAYKKAGVTGHVWQSDGITNCLLRGLTRVREAVANRDSGKGYINKVYYWTVDKRASTRDALDAGVDGVMTNYPDVITDVMNEAAYKNKFRLATYEDNPWETFKK.

The active site involves H5. Mg(2+) is bound by residues E25 and D27. The Nucleophile role is filled by H41. 2 disulfide bridges follow: C45–C51 and C47–C190. D85 serves as a coordination point for Mg(2+).

Belongs to the arthropod phospholipase D family. Class II subfamily. The cofactor is Mg(2+). As to expression, expressed by the venom gland.

It localises to the secreted. It catalyses the reaction an N-(acyl)-sphingosylphosphocholine = an N-(acyl)-sphingosyl-1,3-cyclic phosphate + choline. The enzyme catalyses an N-(acyl)-sphingosylphosphoethanolamine = an N-(acyl)-sphingosyl-1,3-cyclic phosphate + ethanolamine. It carries out the reaction a 1-acyl-sn-glycero-3-phosphocholine = a 1-acyl-sn-glycero-2,3-cyclic phosphate + choline. The catalysed reaction is a 1-acyl-sn-glycero-3-phosphoethanolamine = a 1-acyl-sn-glycero-2,3-cyclic phosphate + ethanolamine. Its function is as follows. Dermonecrotic toxins cleave the phosphodiester linkage between the phosphate and headgroup of certain phospholipids (sphingolipid and lysolipid substrates), forming an alcohol (often choline) and a cyclic phosphate. This toxin acts on sphingomyelin (SM). It may also act on ceramide phosphoethanolamine (CPE), lysophosphatidylcholine (LPC) and lysophosphatidylethanolamine (LPE), but not on lysophosphatidylserine (LPS), and lysophosphatidylglycerol (LPG). It acts by transphosphatidylation, releasing exclusively cyclic phosphate products as second products. Induces dermonecrosis, hemolysis, increased vascular permeability, edema, inflammatory response, and platelet aggregation. The sequence is that of Dermonecrotic toxin LspaSicTox-alphaIA2i from Loxosceles spadicea (Recluse spider).